We begin with the raw amino-acid sequence, 343 residues long: Fructose-bisphosphate aldolase (343 aa).

Ser53 provides a ligand contact to D-glyceraldehyde 3-phosphate. The active-site Proton donor is Asp95. Residues His96, Asp131, Glu161, and His212 each contribute to the Zn(2+) site. Position 213 (Gly213) interacts with dihydroxyacetone phosphate. His252 is a Zn(2+) binding site. Residues 253–255 (GGS) and 274–277 (NIDT) contribute to the dihydroxyacetone phosphate site.

Belongs to the class II fructose-bisphosphate aldolase family. The cofactor is Zn(2+).

The enzyme catalyses beta-D-fructose 1,6-bisphosphate = D-glyceraldehyde 3-phosphate + dihydroxyacetone phosphate. It functions in the pathway carbohydrate degradation; glycolysis; D-glyceraldehyde 3-phosphate and glycerone phosphate from D-glucose: step 4/4. In terms of biological role, catalyzes the aldol condensation of dihydroxyacetone phosphate (DHAP or glycerone-phosphate) with glyceraldehyde 3-phosphate (G3P) to form fructose 1,6-bisphosphate (FBP) in gluconeogenesis and the reverse reaction in glycolysis. The sequence is that of Fructose-bisphosphate aldolase (fba) from Streptomyces coelicolor (strain ATCC BAA-471 / A3(2) / M145).